The sequence spans 121 residues: Basic phospholipase A2 3 (121 aa).

7 disulfide bridges follow: C26–C115, C28–C44, C43–C95, C49–C121, C50–C88, C57–C81, and C75–C86. Residues Y27, G29, and G31 each coordinate Ca(2+). H47 is a catalytic residue. D48 provides a ligand contact to Ca(2+). D89 is an active-site residue.

It belongs to the phospholipase A2 family. Group II subfamily. D49 sub-subfamily. It depends on Ca(2+) as a cofactor. Expressed by the venom gland.

The protein resides in the secreted. It carries out the reaction a 1,2-diacyl-sn-glycero-3-phosphocholine + H2O = a 1-acyl-sn-glycero-3-phosphocholine + a fatty acid + H(+). Functionally, PLA2 catalyzes the calcium-dependent hydrolysis of the 2-acyl groups in 3-sn-phosphoglycerides. The sequence is that of Basic phospholipase A2 3 from Daboia russelii (Russel's viper).